Consider the following 275-residue polypeptide: Large ribosomal subunit protein uL2 (275 aa).

Disordered stretches follow at residues 24 to 54 (LYKGRPHDALTEKKTSKAGRNNSGRVTVRHQ) and 223 to 275 (VAMN…RHKR). 2 stretches are compositionally biased toward basic and acidic residues: residues 25–38 (YKGRPHDALTEKKT) and 229–241 (DHPHGGGEGRTGE).

This sequence belongs to the universal ribosomal protein uL2 family. Part of the 50S ribosomal subunit. Forms a bridge to the 30S subunit in the 70S ribosome.

One of the primary rRNA binding proteins. Required for association of the 30S and 50S subunits to form the 70S ribosome, for tRNA binding and peptide bond formation. It has been suggested to have peptidyltransferase activity; this is somewhat controversial. Makes several contacts with the 16S rRNA in the 70S ribosome. This Azoarcus sp. (strain BH72) protein is Large ribosomal subunit protein uL2.